Consider the following 509-residue polypeptide: Probable cytochrome P450 519B1 (509 aa).

The chain crosses the membrane as a helical span at residues 1–21 (MNLINLILYFILFWIVFDFIR). Cys456 is a heme binding site.

The protein belongs to the cytochrome P450 family. It depends on heme as a cofactor.

It is found in the membrane. The chain is Probable cytochrome P450 519B1 (cyp519B1) from Dictyostelium discoideum (Social amoeba).